The following is a 183-amino-acid chain: Glutathione-regulated potassium-efflux system ancillary protein KefG (183 aa).

This sequence belongs to the NAD(P)H dehydrogenase (quinone) family. KefG subfamily. In terms of assembly, interacts with KefB.

The protein resides in the cell inner membrane. The enzyme catalyses a quinone + NADH + H(+) = a quinol + NAD(+). It carries out the reaction a quinone + NADPH + H(+) = a quinol + NADP(+). Regulatory subunit of a potassium efflux system that confers protection against electrophiles. Required for full activity of KefB. This Pectobacterium carotovorum subsp. carotovorum (strain PC1) protein is Glutathione-regulated potassium-efflux system ancillary protein KefG.